We begin with the raw amino-acid sequence, 432 residues long: DnaJ-like protein 1 (432 aa).

The 70-residue stretch at 4-73 (DTEYYDLLGV…RAKYDKYGRK (70 aa)) folds into the J domain. The interval 117–187 (NAEDEAEKEK…KKNEQVGAEA (71 aa)) is disordered.

Belongs to the DnaJ family. Interacts with SLN1.

The protein localises to the cytoplasm. Functionally, required for peroxisomal protein import which maintains the function of peroxisomes. The polypeptide is DnaJ-like protein 1 (DJP1) (Saccharomyces cerevisiae (strain ATCC 204508 / S288c) (Baker's yeast)).